The primary structure comprises 352 residues: N-acetyl-gamma-glutamyl-phosphate reductase (352 aa).

This sequence belongs to the NAGSA dehydrogenase family. Type 1 subfamily.

It is found in the cytoplasm. It carries out the reaction N-acetyl-L-glutamate 5-semialdehyde + phosphate + NADP(+) = N-acetyl-L-glutamyl 5-phosphate + NADPH + H(+). It functions in the pathway amino-acid biosynthesis; L-arginine biosynthesis; N(2)-acetyl-L-ornithine from L-glutamate: step 3/4. Functionally, catalyzes the NADPH-dependent reduction of N-acetyl-5-glutamyl phosphate to yield N-acetyl-L-glutamate 5-semialdehyde. The chain is N-acetyl-gamma-glutamyl-phosphate reductase from Nostoc ellipsosporum.